Reading from the N-terminus, the 36-residue chain is Cytochrome b6-f complex subunit 5 (36 aa).

The helical transmembrane segment at 5-25 threads the bilayer; that stretch reads LLSGIVLGLIPITILGLLMAA.

The protein belongs to the PetG family. The 4 large subunits of the cytochrome b6-f complex are cytochrome b6, subunit IV (17 kDa polypeptide, PetD), cytochrome f and the Rieske protein, while the 4 small subunits are PetG, PetL, PetM and PetN. The complex functions as a dimer.

It is found in the plastid. Its subcellular location is the chloroplast thylakoid membrane. Its function is as follows. Component of the cytochrome b6-f complex, which mediates electron transfer between photosystem II (PSII) and photosystem I (PSI), cyclic electron flow around PSI, and state transitions. PetG is required for either the stability or assembly of the cytochrome b6-f complex. The polypeptide is Cytochrome b6-f complex subunit 5 (Cyanidioschyzon merolae (strain NIES-3377 / 10D) (Unicellular red alga)).